An 85-amino-acid chain; its full sequence is UPF0291 protein SPCG_1462 (85 aa).

The segment at threonine 62–serine 85 is disordered.

It belongs to the UPF0291 family.

It is found in the cytoplasm. In Streptococcus pneumoniae (strain CGSP14), this protein is UPF0291 protein SPCG_1462.